We begin with the raw amino-acid sequence, 359 residues long: Nicotinate-nucleotide--dimethylbenzimidazole phosphoribosyltransferase (359 aa).

The active-site Proton acceptor is the Glu-318.

The protein belongs to the CobT family. As to quaternary structure, homodimer.

The catalysed reaction is 5,6-dimethylbenzimidazole + nicotinate beta-D-ribonucleotide = alpha-ribazole 5'-phosphate + nicotinate + H(+). Its pathway is nucleoside biosynthesis; alpha-ribazole biosynthesis; alpha-ribazole from 5,6-dimethylbenzimidazole: step 1/2. Functionally, catalyzes the synthesis of alpha-ribazole-5'-phosphate from nicotinate mononucleotide (NAMN) and 5,6-dimethylbenzimidazole (DMB). In Escherichia coli O127:H6 (strain E2348/69 / EPEC), this protein is Nicotinate-nucleotide--dimethylbenzimidazole phosphoribosyltransferase.